Here is a 595-residue protein sequence, read N- to C-terminus: (E)-beta-ocimene synthase, chloroplastic (595 aa).

The N-terminal 32 residues, 1–32 (MSTISINLMSIIRNPLHSKSKRALINKHPSSS), are a transit peptide targeting the chloroplast. Mn(2+)-binding residues include D350 and D354. The DDXXD motif signature appears at 350–354 (DDVYD). 2 homodimerization regions span residues 356-362 (YGTLDEL) and 428-465 (EEEW…LSIP). 2 residues coordinate Mn(2+): N493 and E501.

The protein belongs to the terpene synthase family. Homodimer. The cofactor is Mn(2+). Requires Mg(2+) as cofactor. As to expression, expressed in peltate glandular trichomes. Present in flowers, leaves and stems.

The protein localises to the plastid. Its subcellular location is the chloroplast. It catalyses the reaction (2E)-geranyl diphosphate = (E)-beta-ocimene + diphosphate. It participates in secondary metabolite biosynthesis; terpenoid biosynthesis. Its function is as follows. Involved in the biosynthesis of monoterpenes natural products. Monoterpene synthase that catalyzes mainly the formation of (E)-beta-ocimene and minor amounts of other monoterpenes (e.g. myrcene, (Z)-beta-ocimene, alpha- and gamma-terpinene) from geranyl diphosphate (GPP). This Origanum vulgare (Wild marjoram) protein is (E)-beta-ocimene synthase, chloroplastic.